The following is a 559-amino-acid chain: Glutamine--tRNA ligase (559 aa).

The 'HIGH' region motif lies at 36-46 (PEPNGYLHLGH). Residues 37–39 (EPN) and 43–49 (HLGHAKS) contribute to the ATP site. Positions 69 and 214 each coordinate L-glutamine. ATP is bound by residues T233, 263-264 (RL), and 271-273 (LSK). The 'KMSKS' region signature appears at 270–274 (LLSKR).

Belongs to the class-I aminoacyl-tRNA synthetase family. Monomer.

The protein resides in the cytoplasm. It catalyses the reaction tRNA(Gln) + L-glutamine + ATP = L-glutaminyl-tRNA(Gln) + AMP + diphosphate. The sequence is that of Glutamine--tRNA ligase from Nitrobacter winogradskyi (strain ATCC 25391 / DSM 10237 / CIP 104748 / NCIMB 11846 / Nb-255).